The primary structure comprises 154 residues: Transcriptional repressor NrdR (154 aa).

The segment at 3 to 34 is a zinc-finger region; that stretch reads CPFCGNVDTQVKDSRPAEDNVAIRRRRFCPAC. Residues 49–139 form the ATP-cone domain; that stretch reads LVVVKSSGRR…VYKNFQAADD (91 aa).

The protein belongs to the NrdR family. Zn(2+) serves as cofactor.

Its function is as follows. Negatively regulates transcription of bacterial ribonucleotide reductase nrd genes and operons by binding to NrdR-boxes. This chain is Transcriptional repressor NrdR, found in Paracoccus denitrificans (strain Pd 1222).